We begin with the raw amino-acid sequence, 113 residues long: UPF0342 protein spyM18_0873 (113 aa).

Belongs to the UPF0342 family.

In Streptococcus pyogenes serotype M18 (strain MGAS8232), this protein is UPF0342 protein spyM18_0873.